The following is a 332-amino-acid chain: Myogenic-determination protein (332 aa).

The interval 22-54 is disordered; it reads HNGYGQPTHPGYGFSAYSQQNPIAHPGQNPHQT. A bHLH domain is found at 161-212; the sequence is DRRKAATMRERRRLRKVNEAFEILKRRTSSNPNQRLPKVEILRNAIEYIESL. Residues 293-309 show a composition bias toward polar residues; sequence TTSPIQNKATPSASDTQ. Residues 293 to 332 form a disordered region; it reads TTSPIQNKATPSASDTQSPPSSGATAPTSLHVNFKRKCST. The span at 310-321 shows a compositional bias: low complexity; it reads SPPSSGATAPTS.

Efficient DNA binding requires dimerization with another bHLH protein.

It is found in the nucleus. Functionally, may play an important role in the early development of muscle. This Drosophila melanogaster (Fruit fly) protein is Myogenic-determination protein (nau).